We begin with the raw amino-acid sequence, 535 residues long: Zinc finger protein squeeze (535 aa).

Low complexity-rich tracts occupy residues 70–97 (MVME…HPPQ) and 131–142 (SSASGSGSNGSS). The tract at residues 70–157 (MVMEQQPHPD…RRGDGDQAKP (88 aa)) is disordered. The segment covering 145–156 (EESRRGDGDQAK) has biased composition (basic and acidic residues). C2H2-type zinc fingers lie at residues 158–180 (YKCG…TRIH), 186–208 (YRCE…IRTH), 214–238 (YKCR…SRCH), 244–266 (FKCN…IPKH), and 275–297 (HICN…LQKH). Thr-395 is modified (phosphothreonine). 2 positions are modified to phosphoserine: Ser-399 and Ser-401. Residues 417 to 475 (TPQHHLQQQQQQQQQQQAQQQQQAQHQPSPGPGNSAFTPLSATVAPPPHLQQHRGPPGS) are disordered. Residues 419–443 (QHHLQQQQQQQQQQQAQQQQQAQHQ) show a composition bias toward low complexity. Ser-475 carries the post-translational modification Phosphoserine. Phosphotyrosine occurs at positions 479 and 481.

This sequence belongs to the krueppel C2H2-type zinc-finger protein family. Interacts with nab; which acts as a coactivator. Interacts with ap. In terms of tissue distribution, largely restricted to subsets of cells in the CNS throughout embryonic and first instar larval (L1) development. Expressed in a population of lateral interneurons, primarily projecting axons in the anterior and posterior commissures. Overlaps with ap within the thoracic ap cluster. By stage 17, it is restricted to 2 neurons within the ap-cluster, with one neuron typically continuing to display higher levels of expression. Selectively expressed at higher levels within the FMRFa Tv neurons. Expressed in all leucokinergic cells.

Its subcellular location is the nucleus. Transcription factor involved in neuronal fate specification. First required in embryonic CNS development to define the number of cells that express apterous (ap) in the ap thoracic cluster of interneurons. Later on, it plays a central role in the combinatorial code of transcription factors that specifies the fate of the Tv neuron in the ap cluster by participating in the transcription regulation of FMRFa in Tv cells. Also required for projection neuron dendritic targeting. The polypeptide is Zinc finger protein squeeze (sqz) (Drosophila melanogaster (Fruit fly)).